A 418-amino-acid chain; its full sequence is Thyroxine-binding globulin (418 aa).

The N-terminal stretch at 1–20 (MSMFFYLFLLVLGLQATIHC) is a signal peptide. 6 N-linked (GlcNAc...) asparagine glycosylation sites follow: N24, N39, N102, N168, N227, and N256. Thyroxine is bound by residues N296 and K401.

It belongs to the serpin family. In terms of tissue distribution, expressed by the liver and secreted in plasma.

It localises to the secreted. In terms of biological role, major thyroid hormone transport protein in serum. In Rattus norvegicus (Rat), this protein is Thyroxine-binding globulin (Serpina7).